We begin with the raw amino-acid sequence, 531 residues long: GTPase Obg (531 aa).

The 158-residue stretch at Ala2 to Ile159 folds into the Obg domain. The OBG-type G domain occupies Ala160 to Ser341. GTP-binding positions include Gly166–Ser173, Phe191–Val195, Asp212–Gly215, Asn293–Asp296, and Ser322–Ala324. Residues Ser173 and Thr193 each contribute to the Mg(2+) site. Residues Gln346–Val365 form a disordered region. The region spanning Arg368–Pro453 is the OCT domain. The tract at residues Ala459–Lys531 is disordered. Composition is skewed to basic and acidic residues over residues Ser468–Ala507 and Val514–Lys531.

Belongs to the TRAFAC class OBG-HflX-like GTPase superfamily. OBG GTPase family. Monomer. Mg(2+) serves as cofactor.

Its subcellular location is the cytoplasm. In terms of biological role, an essential GTPase which binds GTP, GDP and possibly (p)ppGpp with moderate affinity, with high nucleotide exchange rates and a fairly low GTP hydrolysis rate. Plays a role in control of the cell cycle, stress response, ribosome biogenesis and in those bacteria that undergo differentiation, in morphogenesis control. The polypeptide is GTPase Obg (Kocuria rhizophila (strain ATCC 9341 / DSM 348 / NBRC 103217 / DC2201)).